Here is a 79-residue protein sequence, read N- to C-terminus: uncharacterized protein (79 aa).

Residues 3 to 54 (SKKNKIVAALLAFFFGGLGIHKFYLGRVGQGILYILFCWTGIPSIIAFIEFI) form the TM2 domain. Transmembrane regions (helical) follow at residues 8–28 (IVAA…FYLG) and 37–57 (ILFC…IIFL).

The protein localises to the cell membrane. This is an uncharacterized protein from Bacillus subtilis (strain 168).